A 456-amino-acid polypeptide reads, in one-letter code: MQLIEIKELLLSHSKREGEQVVLVGSFKSIRSSGAIGFIAFSDSTALEPVQIVFKKENTPNFDEISKLPISSMILVKGVVRNTPEKKQPFEIQASKIVVLKEADPSYPLQKKAHGSEFLRENAHLRVRTNKFYVIMKIRSELANAFFEFFKNNDFLYVHAPLITSNDSEGAGESFEVISPNDPNYFGKKASLTVSGQFAAEAYAQGFKRVFTFGPTFRAEKSHTSKHLSEFWMIEPEVSLMDLDKLTILIEQCVKHAIYYLFDYAKPELEWCNENLEPGLIDKLNNVINNDFPRVEYREVIEILKKAVAEGVEFEVKDIHFGMDLKSEHERYICEKVFKRPVFVINYPKDVKAFYMKLNDDNQTVAATDLLAPGIGEICGGSQREDSYNKLLTRCLELDIDPEFNNLQWYLDLRKYGYYRSAGFGLGFERLLMYVTGCDNIRDAIPFPRFHGQLDF.

The protein belongs to the class-II aminoacyl-tRNA synthetase family. Homodimer.

It localises to the cytoplasm. It carries out the reaction tRNA(Asn) + L-asparagine + ATP = L-asparaginyl-tRNA(Asn) + AMP + diphosphate + H(+). The polypeptide is Asparagine--tRNA ligase (Mycoplasmoides gallisepticum (strain R(low / passage 15 / clone 2)) (Mycoplasma gallisepticum)).